Here is a 63-residue protein sequence, read N- to C-terminus: Disintegrin schistatin-like subunit B (63 aa).

The region spanning 1 to 63 (NSVNPCCDPQ…TPDCPRNRYN (63 aa)) is the Disintegrin domain. Intrachain disulfides connect Cys6/Cys29, Cys20/Cys26, Cys25/Cys50, and Cys38/Cys57. A Cell attachment site motif is present at residues 42 to 44 (RGD).

The protein belongs to the disintegrin family. Dimeric disintegrin subfamily. As to quaternary structure, heterodimer with subunit A; disulfide-linked. In terms of tissue distribution, expressed by the venom gland.

It localises to the secreted. May bind to both alpha-IIb/beta-3 (ITGA2B/ITGB3) and alpha-V/beta-3 (ITGAV/ITGB3) integrins, and may inhibit platelet aggregation. This is Disintegrin schistatin-like subunit B from Echis carinatus (Saw-scaled viper).